Reading from the N-terminus, the 394-residue chain is Dihydroorotase (394 aa).

Zn(2+) contacts are provided by H15, H17, K98, H135, H175, and D245. The residue at position 98 (K98) is an N6-carboxylysine.

The protein belongs to the metallo-dependent hydrolases superfamily. DHOase family. Class II DHOase subfamily. Requires Zn(2+) as cofactor.

The enzyme catalyses (S)-dihydroorotate + H2O = N-carbamoyl-L-aspartate + H(+). It functions in the pathway pyrimidine metabolism; UMP biosynthesis via de novo pathway; (S)-dihydroorotate from bicarbonate: step 3/3. The protein is Dihydroorotase (PYR3) of Mycosarcoma maydis (Corn smut fungus).